We begin with the raw amino-acid sequence, 382 residues long: UBP1-associated proteins 1B (382 aa).

Residues 1-99 (MAKEGEERKK…SDESEEIVDS (99 aa)) form a disordered region. The segment covering 10–22 (KEKKEKKERKERK) has biased composition (basic residues). The segment covering 23 to 34 (RREAEELAVREK) has biased composition (basic and acidic residues). The 86-residue stretch at 163–248 (RNIFVRGLGW…RPFNSGKPRE (86 aa)) folds into the RRM domain.

The protein localises to the nucleus. In terms of biological role, acts as a component of a complex regulating the turnover of mRNAs in the nucleus. Binds with high affinity to RNA molecules that contain U-rich sequences in 3'-UTRs. May function in complex with UBP1 and contribute to the stabilization of mRNAs in the nucleus. This Arabidopsis thaliana (Mouse-ear cress) protein is UBP1-associated proteins 1B (UBA1B).